Reading from the N-terminus, the 348-residue chain is MNMTQARVLVAAVVGLVAVLLYASIHKIEEGHLAVYYRGGALLTSPSGPGYHIMLPFITTFRSVQTTLQTDEVKNVPCGTSGGVMIYIDRIEVVNMLAPYAVFDIVRNYTADYDKTLIFNKIHHELNQFCSAHTLQEVYIELFDQIDENLKQALQKDLNLMAPGLTIQAVRVTKPKIPEAIRRNFELMEAEKTKLLIAAQKQKVVEKEAETERKKAVIEAEKIAQVAKIRFQQKVMEKETEKRISEIEDAAFLAREKAKADAEYYAAHKYATSNKHKLTPEYLELKKYQAIASNSKIYFGSNIPNMFVDSSCALKYSDIRTGRESSHPSKEALEPSGENLIQNKESTG.

Topologically, residues 1–7 are cytoplasmic; it reads MNMTQAR. Residues 8-28 traverse the membrane as a helical segment; that stretch reads VLVAAVVGLVAVLLYASIHKI. The Lumenal segment spans residues 29–348; that stretch reads EEGHLAVYYR…NLIQNKESTG (320 aa). A glycan (N-linked (GlcNAc...) asparagine) is linked at asparagine 108. Lysine 269 is modified (N6-acetyllysine). Residues 321-333 are compositionally biased toward basic and acidic residues; the sequence is TGRESSHPSKEAL. Positions 321 to 348 are disordered; it reads TGRESSHPSKEALEPSGENLIQNKESTG. The span at 339–348 shows a compositional bias: polar residues; that stretch reads NLIQNKESTG.

This sequence belongs to the band 7/mec-2 family. Forms a heteromeric complex with ERLIN2. In complex with ERLIN2, interacts with RNF170. Interacts with AMFR and SYVN1. In terms of processing, deubiquitinated by USP25; leading to stabilization.

It is found in the endoplasmic reticulum membrane. Its function is as follows. Component of the ERLIN1/ERLIN2 complex which mediates the endoplasmic reticulum-associated degradation (ERAD) of inositol 1,4,5-trisphosphate receptors (IP3Rs). Involved in regulation of cellular cholesterol homeostasis by regulation the SREBP signaling pathway. Binds cholesterol and may promote ER retention of the SCAP-SREBF complex. The sequence is that of Erlin-1 from Pongo abelii (Sumatran orangutan).